We begin with the raw amino-acid sequence, 349 residues long: Phosphoribosylformylglycinamidine cyclo-ligase (349 aa).

Belongs to the AIR synthase family.

The protein localises to the cytoplasm. The enzyme catalyses 2-formamido-N(1)-(5-O-phospho-beta-D-ribosyl)acetamidine + ATP = 5-amino-1-(5-phospho-beta-D-ribosyl)imidazole + ADP + phosphate + H(+). The protein operates within purine metabolism; IMP biosynthesis via de novo pathway; 5-amino-1-(5-phospho-D-ribosyl)imidazole from N(2)-formyl-N(1)-(5-phospho-D-ribosyl)glycinamide: step 2/2. This Albidiferax ferrireducens (strain ATCC BAA-621 / DSM 15236 / T118) (Rhodoferax ferrireducens) protein is Phosphoribosylformylglycinamidine cyclo-ligase.